A 488-amino-acid polypeptide reads, in one-letter code: Monodehydroascorbate reductase 4, peroxisomal (488 aa).

Over 1–3 (MGR) the chain is Cytoplasmic. The helical transmembrane segment at 4–24 (AFVYVILGGGVAAGYAALEFT) threads the bilayer. Residues 12–15 (GGVA), Glu-39, Arg-46, Lys-51, and 145–146 (RD) contribute to the FAD site. Residues 25 to 458 (RRGVSDGELC…SASVVMIKKP (434 aa)) are Peroxisomal-facing. Residues 170–176 (GGYIGME), Glu-194, Arg-200, and Gly-259 contribute to the NAD(+) site. Residue 172–176 (YIGME) coordinates NADP(+). NADP(+) contacts are provided by Arg-200 and Gly-259. Asp-296 is a binding site for FAD. Residue 312–313 (EH) participates in NAD(+) binding. NADP(+) is bound at residue 312 to 313 (EH). Residue Val-314 coordinates FAD. Residue Arg-318 coordinates L-ascorbate. Tyr-344 is an FAD binding site. Tyr-344 contributes to the NAD(+) binding site. Residue Tyr-344 participates in NADP(+) binding. Residue Arg-346 coordinates L-ascorbate. The chain crosses the membrane as a helical span at residues 459 to 479 (LYVWHAATGVVVAASVAAFAF). The Cytoplasmic segment spans residues 480 to 488 (WYGRRRRRW).

This sequence belongs to the FAD-dependent oxidoreductase family. The cofactor is FAD.

Its subcellular location is the peroxisome membrane. It catalyses the reaction 2 monodehydro-L-ascorbate radical + NADH + H(+) = 2 L-ascorbate + NAD(+). In terms of biological role, catalyzes the conversion of monodehydroascorbate to ascorbate, oxidizing NADH in the process. Involved in the detoxification of H(2)O(2) that escapes the peroxisome and causes oxidative damage to oil bodies. This is Monodehydroascorbate reductase 4, peroxisomal from Arabidopsis thaliana (Mouse-ear cress).